The chain runs to 138 residues: Small ribosomal subunit protein uS11 (138 aa).

Residues 1–12 show a composition bias toward low complexity; it reads MAQAKKGGTAAK. 2 disordered regions span residues 1–32 and 119–138; these read MAQAKKGGTAAKKGQKTRRREKKNVPHGAAHI and ISDVTPQPHNGCRPPKRRRV. Over residues 13 to 22 the composition is skewed to basic residues; the sequence is KGQKTRRREK.

Belongs to the universal ribosomal protein uS11 family. In terms of assembly, part of the 30S ribosomal subunit. Interacts with proteins S7 and S18. Binds to IF-3.

Functionally, located on the platform of the 30S subunit, it bridges several disparate RNA helices of the 16S rRNA. Forms part of the Shine-Dalgarno cleft in the 70S ribosome. The protein is Small ribosomal subunit protein uS11 of Mycolicibacterium smegmatis (strain ATCC 700084 / mc(2)155) (Mycobacterium smegmatis).